A 96-amino-acid chain; its full sequence is Small ribosomal subunit protein bS6 (96 aa).

Belongs to the bacterial ribosomal protein bS6 family.

Its function is as follows. Binds together with bS18 to 16S ribosomal RNA. The protein is Small ribosomal subunit protein bS6 of Heliobacterium modesticaldum (strain ATCC 51547 / Ice1).